Consider the following 565-residue polypeptide: NAD-dependent malic enzyme (565 aa).

The active-site Proton donor is the Y104. NAD(+) is bound at residue R157. The active-site Proton acceptor is the K175. The a divalent metal cation site is built by E246, D247, and D270. D270 and N418 together coordinate NAD(+).

This sequence belongs to the malic enzymes family. As to quaternary structure, homotetramer. Mg(2+) serves as cofactor. Requires Mn(2+) as cofactor.

It catalyses the reaction (S)-malate + NAD(+) = pyruvate + CO2 + NADH. The catalysed reaction is oxaloacetate + H(+) = pyruvate + CO2. This is NAD-dependent malic enzyme from Yersinia enterocolitica serotype O:8 / biotype 1B (strain NCTC 13174 / 8081).